The following is a 300-amino-acid chain: Ribosomal protein bS6--L-glutamate ligase (300 aa).

One can recognise an ATP-grasp domain in the interval 104–287 (LQLLARQGID…IAGRMIQWIE (184 aa)). ATP-binding positions include Lys-141, 178–179 (EY), Asp-187, and 211–213 (RSN). Mg(2+)-binding residues include Asp-248, Glu-260, and Asn-262. The Mn(2+) site is built by Asp-248, Glu-260, and Asn-262.

It belongs to the RimK family. Mg(2+) is required as a cofactor. It depends on Mn(2+) as a cofactor.

In terms of biological role, an L-glutamate ligase that catalyzes the ATP-dependent post-translational addition of glutamate residues to the C-terminus of ribosomal protein bS6 (RpsF). Is also able to catalyze the synthesis of poly-alpha-glutamate in vitro, via ATP hydrolysis from unprotected glutamate as substrate. The number of glutamate residues added to either RpsF or to poly-alpha-glutamate changes with pH. The chain is Ribosomal protein bS6--L-glutamate ligase from Salmonella schwarzengrund (strain CVM19633).